Consider the following 286-residue polypeptide: PTS system mannose-specific EIID component (286 aa).

M1 bears the N-formylmethionine mark. At 1–17 the chain is on the cytoplasmic side; that stretch reads MSEMVDTTQTTTEKKLT. The region spanning 14–284 is the PTS EIID domain; sequence KKLTQSDIRG…GIAGYACGLL (271 aa). An intramembrane segment occupies 18–55; the sequence is QSDIRGVFLRSNLFQGSWNFERMQALGFCFSMVPAIRR. At 56–62 the chain is on the cytoplasmic side; the sequence is LYPENNE. An intramembrane segment occupies 63–95; that stretch reads ARKQAIRRHLEFFNTQPFVAAPILGVTLALEEQ. Residues 96-103 lie on the Cytoplasmic side of the membrane; sequence RANGAEID. Positions 104–143 form a transmembrane segment; the sequence is DGAINGIKVGLMGPLAGVGDPIFWGTVRPVFAALGAGIAM. The Periplasmic segment spans residues 144–147; it reads SGSL. A membrane pass occupies residues 148 to 176; it reads LGPLLFFILFNLVRLATRYYGVAYGYSKG. Residues 177 to 186 are Cytoplasmic-facing; the sequence is IDIVKDMGGG. A membrane pass occupies residues 187–212; that stretch reads FLQKLTEGASILGLFVMGALVNKWTH. The Periplasmic portion of the chain corresponds to 213–244; the sequence is VNIPLVVSRITDQTGKEHVTTVQTILDQLMPG. The segment at 245–258 is a transmembrane helix; that stretch reads LVPLLLTFACMWLL. The Cytoplasmic segment spans residues 259–264; that stretch reads RKKVNP. A transmembrane helix spans residues 265-283; the sequence is LWIIVGFFVIGIAGYACGL. Residues 284–286 are Periplasmic-facing; the sequence is LGL.

Homotrimer of protomers that are composed of two subunits, IIC and IID.

It localises to the cell inner membrane. Functionally, the phosphoenolpyruvate-dependent sugar phosphotransferase system (sugar PTS), a major carbohydrate active transport system, catalyzes the phosphorylation of incoming sugar substrates concomitantly with their translocation across the cell membrane. The enzyme II ManXYZ PTS system is involved in mannose transport. This chain is PTS system mannose-specific EIID component (manZ), found in Escherichia coli O6:H1 (strain CFT073 / ATCC 700928 / UPEC).